The primary structure comprises 291 residues: N-acetylmannosamine kinase (291 aa).

ATP-binding positions include A5–K12 and G132–S139. Zn(2+)-binding residues include H156, C166, C168, and C173.

Belongs to the ROK (NagC/XylR) family. NanK subfamily. In terms of assembly, homodimer.

It carries out the reaction an N-acyl-D-mannosamine + ATP = an N-acyl-D-mannosamine 6-phosphate + ADP + H(+). It functions in the pathway amino-sugar metabolism; N-acetylneuraminate degradation; D-fructose 6-phosphate from N-acetylneuraminate: step 2/5. Functionally, catalyzes the phosphorylation of N-acetylmannosamine (ManNAc) to ManNAc-6-P. The protein is N-acetylmannosamine kinase of Escherichia coli O139:H28 (strain E24377A / ETEC).